The sequence spans 334 residues: Ornithine carbamoyltransferase (334 aa).

Carbamoyl phosphate contacts are provided by residues 57–60, Gln84, Arg108, and 135–138; these read STRT and HPTQ. Residues Asn169, Asp233, and 237-238 contribute to the L-ornithine site; that span reads SM. Carbamoyl phosphate is bound by residues 275-276 and Arg320; that span reads CL.

Belongs to the aspartate/ornithine carbamoyltransferase superfamily. OTCase family.

Its subcellular location is the cytoplasm. It carries out the reaction carbamoyl phosphate + L-ornithine = L-citrulline + phosphate + H(+). The protein operates within amino-acid biosynthesis; L-arginine biosynthesis; L-arginine from L-ornithine and carbamoyl phosphate: step 1/3. Reversibly catalyzes the transfer of the carbamoyl group from carbamoyl phosphate (CP) to the N(epsilon) atom of ornithine (ORN) to produce L-citrulline. This Vibrio vulnificus (strain YJ016) protein is Ornithine carbamoyltransferase.